The primary structure comprises 1052 residues: Suppressor of RPS4-RLD 1 (1052 aa).

Position 2 is an N-acetylalanine (alanine 2). TPR repeat units follow at residues 39 to 72 (ILDI…EPFA) and 74 to 106 (QAFI…ALQQ). The stretch at 107 to 136 (TADVKQLLELEELLKDARREIDGILKSHAT) forms a coiled coil. The tract at residues 131-181 (LKSHATESPQETPAYHSEKSDEKSDKLDNHESGASSNGNSHESSSELGEQS) is disordered. A compositionally biased stretch (basic and acidic residues) spans 146 to 161 (HSEKSDEKSDKLDNHE). The segment covering 162–181 (SGASSNGNSHESSSELGEQS) has biased composition (low complexity). TPR repeat units lie at residues 297–330 (VDFR…EPTY), 331–364 (PEAL…NPAA), 365–398 (SEAW…EPNS), 400–432 (DVLH…EKDN), 433–466 (KSAY…DSNY), 468–500 (EAWL…DNRV), 502–534 (KAYH…ENTI), 535–567 (ECLY…ELDA), and 569–591 (EKFV…ASKV). Positions 704–739 (STKGTTKNGKKNRRRERTNILSQNRGGAGCSSSSFS) are disordered. The chain crosses the membrane as a helical span at residues 966-986 (GTAVTGFVVLLGLLLAANMEF).

As to quaternary structure, multimer. Interacts with EDS1. Interacts with SNC1 and RPS4. Interacts (via TPR domain) with SGT1 (via TPR domain). Interacts with the TCP transcription factors TCP8, TCP14, TCP15, TCP20, TCP22 and TCP23. As to expression, ubiquitous. Not detected in very young flowers and older siliques.

The protein resides in the nucleus. The protein localises to the cytoplasm. It localises to the perinuclear region. Its subcellular location is the membrane. It is found in the microsome. In terms of biological role, negative regulator of effector-triggered immunity associated with the EDS1 resistance pathway. May localize its interactors to a microsomal membrane. May therefore negatively regulate RPS4 and SNC1 translocation to the nucleus. Contributes to the regulation of RPS2 and RPS4 protein levels and negatively regulates SNC1 stability. The sequence is that of Suppressor of RPS4-RLD 1 from Arabidopsis thaliana (Mouse-ear cress).